The primary structure comprises 750 residues: Photosystem I P700 chlorophyll a apoprotein A1 (750 aa).

A run of 8 helical transmembrane segments spans residues 70-93 (VFSAHFGQLSIIFLWLSGMYFHGA), 156-179 (LYCTAIGALVFAALMLFAGWFHYH), 195-219 (LNHHLAGLLGLGSLSWAGHQIHVSL), 291-309 (IAHHHLAIAILFLIAGHMY), 346-369 (WHAQLALNLAMLGSLTIVVAHHMY), 385-411 (LSLFTHHMWIGGFLIVGAAAHAAIFMV), 433-455 (AIISHLNWACIFLGFHSFGLYIH), and 531-549 (FLVHHIHAFTIHVTVLILL). The [4Fe-4S] cluster site is built by Cys-573 and Cys-582. A run of 2 helical transmembrane segments spans residues 589–610 (HVFLGLFWMYNSISVVIFHFSW) and 664–686 (LSAYGLFFLGAHFVWAFSLMFLF). Position 675 (His-675) interacts with chlorophyll a'. Chlorophyll a is bound by residues Met-683 and Tyr-691. Phylloquinone is bound at residue Trp-692. A helical membrane pass occupies residues 724–744 (AVGVTHYLLGGIATTWAFFLA).

Belongs to the PsaA/PsaB family. The PsaA/B heterodimer binds the P700 chlorophyll special pair and subsequent electron acceptors. PSI consists of a core antenna complex that captures photons, and an electron transfer chain that converts photonic excitation into a charge separation. The eukaryotic PSI reaction center is composed of at least 11 subunits. P700 is a chlorophyll a/chlorophyll a' dimer, A0 is one or more chlorophyll a, A1 is one or both phylloquinones and FX is a shared 4Fe-4S iron-sulfur center. serves as cofactor.

It localises to the plastid. It is found in the chloroplast thylakoid membrane. It carries out the reaction reduced [plastocyanin] + hnu + oxidized [2Fe-2S]-[ferredoxin] = oxidized [plastocyanin] + reduced [2Fe-2S]-[ferredoxin]. In terms of biological role, psaA and PsaB bind P700, the primary electron donor of photosystem I (PSI), as well as the electron acceptors A0, A1 and FX. PSI is a plastocyanin-ferredoxin oxidoreductase, converting photonic excitation into a charge separation, which transfers an electron from the donor P700 chlorophyll pair to the spectroscopically characterized acceptors A0, A1, FX, FA and FB in turn. Oxidized P700 is reduced on the lumenal side of the thylakoid membrane by plastocyanin. The protein is Photosystem I P700 chlorophyll a apoprotein A1 of Acorus calamus (Sweet flag).